A 316-amino-acid polypeptide reads, in one-letter code: Pantothenate kinase (316 aa).

Position 95–102 (95–102) interacts with ATP; it reads GSVAVGKS.

Belongs to the prokaryotic pantothenate kinase family.

The protein localises to the cytoplasm. It catalyses the reaction (R)-pantothenate + ATP = (R)-4'-phosphopantothenate + ADP + H(+). It functions in the pathway cofactor biosynthesis; coenzyme A biosynthesis; CoA from (R)-pantothenate: step 1/5. The protein is Pantothenate kinase of Shigella sonnei (strain Ss046).